We begin with the raw amino-acid sequence, 314 residues long: Altered inheritance of mitochondria protein 6 homolog ARB_06966 (314 aa).

The first 21 residues, 1 to 21 (MKSSILASAAILAASLEPVAA), serve as a signal peptide directing secretion. N-linked (GlcNAc...) asparagine glycosylation is found at Asn91 and Asn184.

The protein belongs to the AIM6 family.

The protein localises to the secreted. This chain is Altered inheritance of mitochondria protein 6 homolog ARB_06966, found in Arthroderma benhamiae (strain ATCC MYA-4681 / CBS 112371) (Trichophyton mentagrophytes).